A 328-amino-acid chain; its full sequence is L-lactate dehydrogenase (328 aa).

NAD(+) is bound by residues V18, E39, K46, Y71, and 85–86; that span reads GA. 2 residues coordinate substrate: Q88 and R94. NAD(+) is bound by residues S107, 124-126, and S149; that span reads AAN. 126-129 provides a ligand contact to substrate; sequence NPVD. Position 154 to 157 (154 to 157) interacts with substrate; that stretch reads DSAR. Residues R159 and H174 each contribute to the beta-D-fructose 1,6-bisphosphate site. Catalysis depends on H181, which acts as the Proton acceptor. Position 226 is a phosphotyrosine (Y226). T235 lines the substrate pocket.

It belongs to the LDH/MDH superfamily. LDH family. In terms of assembly, homotetramer.

Its subcellular location is the cytoplasm. The enzyme catalyses (S)-lactate + NAD(+) = pyruvate + NADH + H(+). The protein operates within fermentation; pyruvate fermentation to lactate; (S)-lactate from pyruvate: step 1/1. Its activity is regulated as follows. Allosterically activated by fructose 1,6-bisphosphate (FBP). In terms of biological role, catalyzes the conversion of lactate to pyruvate. This Streptococcus thermophilus (strain ATCC BAA-250 / LMG 18311) protein is L-lactate dehydrogenase.